The primary structure comprises 183 residues: DELTA-miturgitoxin-Cp1a (183 aa).

An N-terminal signal peptide occupies residues 1 to 20 (MKFSLFFSVFFLAVLHACLS). Positions 21-47 (ESEIDLEDEEHFMSSDSFLSEIQDESR) are excised as a propeptide. The Processing quadruplet motif motif lies at 44 to 47 (DESR). 8 disulfide bridges follow: cysteine 51–cysteine 66, cysteine 58–cysteine 75, cysteine 65–cysteine 88, cysteine 77–cysteine 86, cysteine 115–cysteine 130, cysteine 122–cysteine 139, cysteine 129–cysteine 157, and cysteine 141–cysteine 155. 2 Domain repeats span residues 51–77 (CIERNKECTNDRHGCCRGKIFKDKCTC) and 115–141 (CVPKHADCSKRKDDCCKGGIFKYQCKC). The interval 51–141 (CIERNKECTN…GGIFKYQCKC (91 aa)) is 2 X approximate repeats with cysteine pattern C-C-CC-C-C. The tract at residues 164–177 (QAIEGALRIAKKLI) is predicted alpha-helix. Tryptophan 181 carries the tryptophan amide modification.

The protein belongs to the neurotoxin 19 (CSTX) family. Double-CSTX subfamily. Post-translationally, cleavage of the propeptide depends on the processing quadruplet motif (XXXR, with at least one of X being E). Expressed by the venom gland.

Its subcellular location is the secreted. The protein resides in the target cell membrane. Its function is as follows. Spider venom toxin that exhibits cytolytic activity by forming an alpha-helix across the membrane. Lethal to insect larvae. Causes instant paralysis and death in the larvae of the flesh fly (S.carnaria) at doses of 20 ug/g, at doses of less than 10 ug/g causes reversible paralysis. Has cytolytic activity against insect Sf9 cells. Causes stable and irreversible depolarization of fly muscle fibers, leading to contracture at higher toxin concentrations. Destabilizes membranes. The polypeptide is DELTA-miturgitoxin-Cp1a (Cheiracanthium punctorium (Yellow sac spider)).